Consider the following 458-residue polypeptide: Lysine-rich nucleolar protein 1 (458 aa).

Positions Met1–Glu14 are enriched in basic and acidic residues. The disordered stretch occupies residues Met1–Val21. A Glycyl lysine isopeptide (Lys-Gly) (interchain with G-Cter in SUMO2) cross-link involves residue Lys7. Phosphoserine is present on residues Ser42 and Ser50. Positions Ala46–Lys305 are disordered. The segment covering Val64–Gly73 has biased composition (basic residues). Lys101 is covalently cross-linked (Glycyl lysine isopeptide (Lys-Gly) (interchain with G-Cter in SUMO2)). Ser111 carries the phosphoserine modification. Lys130 is covalently cross-linked (Glycyl lysine isopeptide (Lys-Gly) (interchain with G-Cter in SUMO2)). The residue at position 132 (Ser132) is a Phosphoserine. A compositionally biased stretch (basic residues) spans Gly145–Lys155. The span at Glu173 to Glu192 shows a compositional bias: basic and acidic residues. Residues Gln198–Ile218 are compositionally biased toward basic residues. Residue Lys249 forms a Glycyl lysine isopeptide (Lys-Gly) (interchain with G-Cter in SUMO1); alternate linkage. Residue Lys249 forms a Glycyl lysine isopeptide (Lys-Gly) (interchain with G-Cter in SUMO2); alternate linkage. Ser265 bears the Phosphoserine mark. Over residues Ser265–Lys274 the composition is skewed to basic residues. Residues Lys275, Lys287, and Lys305 each participate in a glycyl lysine isopeptide (Lys-Gly) (interchain with G-Cter in SUMO2) cross-link. Residues Glu306–Asp458 form an interaction with ZNF106 region. Residues Thr308 and Thr310 each carry the phosphothreonine modification. Glycyl lysine isopeptide (Lys-Gly) (interchain with G-Cter in SUMO2) cross-links involve residues Lys319, Lys353, Lys373, Lys375, and Lys407. Residues Gln336–Lys353 are compositionally biased toward basic and acidic residues. Positions Gln336 to Thr355 are disordered. Arg430 carries the post-translational modification Omega-N-methylarginine. Lys442 is covalently cross-linked (Glycyl lysine isopeptide (Lys-Gly) (interchain with G-Cter in SUMO2)).

Interacts with ZNF106.

The protein resides in the nucleus. The protein localises to the nucleolus. The chain is Lysine-rich nucleolar protein 1 (KNOP1) from Homo sapiens (Human).